Here is a 97-residue protein sequence, read N- to C-terminus: Cysteine-rich and transmembrane domain-containing protein 1 (97 aa).

The span at 1–40 shows a compositional bias: pro residues; the sequence is MNQENPPPYPGPGPTAPYPPYPPQPMGPGPMGGPYPPPQG. Positions 1–61 are disordered; sequence MNQENPPPYP…QGGPQEPPKT (61 aa). A compositionally biased stretch (low complexity) spans 41-50; the sequence is YPYQGYPQYG. A helical transmembrane segment spans residues 74 to 91; that stretch reads LGPSTCLTACWTALCCCC.

The protein belongs to the CYSTM1 family.

It localises to the membrane. This Homo sapiens (Human) protein is Cysteine-rich and transmembrane domain-containing protein 1 (CYSTM1).